The primary structure comprises 897 residues: Echinoderm microtubule-associated protein-like 3 (897 aa).

The residue at position 1 (Met-1) is an N-acetylmethionine. The stretch at 16-43 forms a coiled coil; sequence LQTLSQRLRVQEEEMELVKAALAEALRL. Positions 51 to 68 are enriched in polar residues; the sequence is TTLQGSGISAPTRNSSIT. A disordered region spans residues 51 to 210; it reads TTLQGSGISA…GGPGSRRSNY (160 aa). Composition is skewed to low complexity over residues 96–108, 118–132, and 155–164; these read PSSG…NGPP, SGTQ…SSGA, and RNSSSSSSPS. Positions 175-190 are enriched in polar residues; the sequence is AASSANLLLRSGSTES. Ser-177, Ser-199, and Ser-205 each carry phosphoserine. 13 WD repeats span residues 235–287, 296–345, 351–393, 399–435, 449–488, 505–544, 550–585, 590–627, 630–668, 675–710, 717–756, 766–824, and 831–870; these read RSLE…LYRP, GGGQ…IWDS, LQEI…VWDC, LAEI…FWNW, RKQG…TWGR, YTIV…QWGP, QEAE…LRGD, FSPV…LWDG, HALA…VLDT, SDVT…IYSV, SSRF…YWDV, RYES…LFQY, and APSR…QWRV. The tract at residues 876–897 is disordered; it reads SGPAPATPSRTPSLSPASSLDV. Thr-882 carries the phosphothreonine; by CDK1 modification. Residues 883-897 show a composition bias toward polar residues; sequence PSRTPSLSPASSLDV. At Ser-884 the chain carries Phosphoserine.

It belongs to the WD repeat EMAP family. As to quaternary structure, homotrimer; self-association is mediated by the N-terminal coiled coil. Interacts with EML2 but not with EML1. Interacts (phosphorylated at Thr-882) with TUBG1, HAUS1, HAUS2, HAUS3, HAUS4, HAUS5, HAUS6, HAUS7 and HAUS8. In terms of processing, phosphorylation at Thr-882 during mitosis is required for interaction with TUBG1, HAUS1, HAUS2, HAUS3, HAUS4, HAUS5, HAUS6, HAUS7 and HAUS8 and their recruitment to spindle microtubules.

It is found in the cytoplasm. The protein localises to the cytoskeleton. The protein resides in the nucleus. It localises to the midbody. Its subcellular location is the spindle. Regulates mitotic spindle assembly, microtubule (MT)-kinetochore attachment and chromosome separation via recruitment of HAUS augmin-like complex and TUBG1 to the existing MTs and promoting MT-based MT nucleation. Required for proper alignnment of chromosomes during metaphase. This is Echinoderm microtubule-associated protein-like 3 (Eml3) from Mus musculus (Mouse).